The primary structure comprises 66 residues: Large ribosomal subunit protein bL35 (66 aa).

It belongs to the bacterial ribosomal protein bL35 family.

The protein is Large ribosomal subunit protein bL35 of Lysinibacillus sphaericus (strain C3-41).